The sequence spans 557 residues: Dihydroxy-acid dehydratase (557 aa).

Position 47 (cysteine 47) interacts with [2Fe-2S] cluster. Aspartate 79 is a binding site for Mg(2+). Cysteine 120 is a [2Fe-2S] cluster binding site. Residues aspartate 121 and lysine 122 each contribute to the Mg(2+) site. Lysine 122 bears the N6-carboxylysine mark. Residue cysteine 192 participates in [2Fe-2S] cluster binding. Glutamate 444 is a binding site for Mg(2+). The active-site Proton acceptor is serine 470.

The protein belongs to the IlvD/Edd family. As to quaternary structure, homodimer. [2Fe-2S] cluster serves as cofactor. The cofactor is Mg(2+).

It catalyses the reaction (2R)-2,3-dihydroxy-3-methylbutanoate = 3-methyl-2-oxobutanoate + H2O. The catalysed reaction is (2R,3R)-2,3-dihydroxy-3-methylpentanoate = (S)-3-methyl-2-oxopentanoate + H2O. It functions in the pathway amino-acid biosynthesis; L-isoleucine biosynthesis; L-isoleucine from 2-oxobutanoate: step 3/4. The protein operates within amino-acid biosynthesis; L-valine biosynthesis; L-valine from pyruvate: step 3/4. Its function is as follows. Functions in the biosynthesis of branched-chain amino acids. Catalyzes the dehydration of (2R,3R)-2,3-dihydroxy-3-methylpentanoate (2,3-dihydroxy-3-methylvalerate) into 2-oxo-3-methylpentanoate (2-oxo-3-methylvalerate) and of (2R)-2,3-dihydroxy-3-methylbutanoate (2,3-dihydroxyisovalerate) into 2-oxo-3-methylbutanoate (2-oxoisovalerate), the penultimate precursor to L-isoleucine and L-valine, respectively. The polypeptide is Dihydroxy-acid dehydratase (Synechococcus sp. (strain CC9902)).